The chain runs to 155 residues: MSKKVINVVLKENIQKLGKSNDVIKVASGYARNFLIPNKMAAVATNGILKQQKFYAAIREEKLKTAKENAKKVKQLLEEIQRFSVSKKTGDGHNIFGSVTEKEISQIIKNTTNIDIEKQSISLPDVKTIGIYDVEIKLLHQVTANIKLQVLPESN.

The protein belongs to the bacterial ribosomal protein bL9 family.

It localises to the plastid. The protein resides in the chloroplast. Its function is as follows. Binds to the 23S rRNA. The sequence is that of Large ribosomal subunit protein bL9c from Pyropia yezoensis (Susabi-nori).